Here is a 585-residue protein sequence, read N- to C-terminus: Bifunctional purine biosynthesis protein ade10 (585 aa).

Positions 1-142 (MYALLSVYDK…KNHARVTILS (142 aa)) constitute an MGS-like domain. Residues 30-33 (SGGT), 60-63 (RVKT), 97-98 (CN), and 121-122 (DI) contribute to the IMP site. The Proton donor/acceptor; for FAICAR cyclization activity role is filled by Lys133. Residues 200–201 (RY), His260, Gly308, Asp331, Asn423, and Arg443 contribute to the 5-amino-1-(5-phospho-beta-D-ribosyl)imidazole-4-carboxamide site. The active-site Proton acceptor; for AICAR formyltransferase activity is the His260. Ile444 contacts (6R)-10-formyltetrahydrofolate. Residue Phe534 coordinates 5-amino-1-(5-phospho-beta-D-ribosyl)imidazole-4-carboxamide. (6R)-10-formyltetrahydrofolate is bound by residues Asp539 and 558-559 (SV). Position 581 (Arg581) interacts with 5-amino-1-(5-phospho-beta-D-ribosyl)imidazole-4-carboxamide.

The protein belongs to the PurH family. As to quaternary structure, homodimer.

It localises to the cytoplasm. Its subcellular location is the cytosol. The enzyme catalyses (6R)-10-formyltetrahydrofolate + 5-amino-1-(5-phospho-beta-D-ribosyl)imidazole-4-carboxamide = 5-formamido-1-(5-phospho-D-ribosyl)imidazole-4-carboxamide + (6S)-5,6,7,8-tetrahydrofolate. The catalysed reaction is IMP + H2O = 5-formamido-1-(5-phospho-D-ribosyl)imidazole-4-carboxamide. The protein operates within purine metabolism; IMP biosynthesis via de novo pathway; 5-formamido-1-(5-phospho-D-ribosyl)imidazole-4-carboxamide from 5-amino-1-(5-phospho-D-ribosyl)imidazole-4-carboxamide (10-formyl THF route): step 1/1. Its pathway is purine metabolism; IMP biosynthesis via de novo pathway; IMP from 5-formamido-1-(5-phospho-D-ribosyl)imidazole-4-carboxamide: step 1/1. Functionally, bifunctional enzyme that catalyzes the last two steps of purine biosynthesis. Acts as a transformylase that incorporates a formyl group to the AMP analog AICAR (5-amino-1-(5-phospho-beta-D-ribosyl)imidazole-4-carboxamide) to produce the intermediate formyl-AICAR (FAICAR). Also catalyzes the cyclization of FAICAR to IMP. In Schizosaccharomyces pombe (strain 972 / ATCC 24843) (Fission yeast), this protein is Bifunctional purine biosynthesis protein ade10 (ade10).